Reading from the N-terminus, the 272-residue chain is uncharacterized protein (272 aa).

Residues 20–133 (PVLIFIPGAN…PPINTFLPDS (114 aa)) enclose the AB hydrolase-1 domain.

Belongs to the AB hydrolase superfamily.

This is an uncharacterized protein from Staphylococcus aureus (strain MSSA476).